Here is a 92-residue protein sequence, read N- to C-terminus: Small ribosomal subunit protein uS19c (92 aa).

It belongs to the universal ribosomal protein uS19 family.

It is found in the plastid. The protein localises to the chloroplast. Its function is as follows. Protein S19 forms a complex with S13 that binds strongly to the 16S ribosomal RNA. This Lobularia maritima (Sweet alyssum) protein is Small ribosomal subunit protein uS19c.